The primary structure comprises 393 residues: Riboflavin biosynthesis protein RibBA (393 aa).

A DHBP synthase region spans residues 1–200; that stretch reads MQFDNIDSAL…IDDLIEYRKK (200 aa). Residues 27–28, Asp32, 139–143, and Glu163 each bind D-ribulose 5-phosphate; these read RE and RNGHT. Position 28 (Glu28) interacts with Mg(2+). Mg(2+) is bound at residue His142. The GTP cyclohydrolase II stretch occupies residues 201–393; it reads LEPEIEFKAK…TKKIKMGHLI (193 aa). A GTP-binding site is contributed by 249–253; sequence RLHSA. Zn(2+)-binding residues include Cys254, Cys265, and Cys267. GTP is bound by residues Gln270, 291–293, and Thr313; that span reads EGR. Asp325 (proton acceptor; for GTP cyclohydrolase activity) is an active-site residue. The Nucleophile; for GTP cyclohydrolase activity role is filled by Arg327. Residues Ser348 and Lys353 each contribute to the GTP site.

It in the N-terminal section; belongs to the DHBP synthase family. In the C-terminal section; belongs to the GTP cyclohydrolase II family. Mg(2+) is required as a cofactor. It depends on Mn(2+) as a cofactor. Zn(2+) serves as cofactor.

The enzyme catalyses D-ribulose 5-phosphate = (2S)-2-hydroxy-3-oxobutyl phosphate + formate + H(+). The catalysed reaction is GTP + 4 H2O = 2,5-diamino-6-hydroxy-4-(5-phosphoribosylamino)-pyrimidine + formate + 2 phosphate + 3 H(+). It participates in cofactor biosynthesis; riboflavin biosynthesis; 2-hydroxy-3-oxobutyl phosphate from D-ribulose 5-phosphate: step 1/1. The protein operates within cofactor biosynthesis; riboflavin biosynthesis; 5-amino-6-(D-ribitylamino)uracil from GTP: step 1/4. Its function is as follows. Catalyzes the conversion of D-ribulose 5-phosphate to formate and 3,4-dihydroxy-2-butanone 4-phosphate. Catalyzes the conversion of GTP to 2,5-diamino-6-ribosylamino-4(3H)-pyrimidinone 5'-phosphate (DARP), formate and pyrophosphate. This Staphylococcus aureus (strain MRSA252) protein is Riboflavin biosynthesis protein RibBA.